The sequence spans 119 residues: Large ribosomal subunit protein bL20 (119 aa).

This sequence belongs to the bacterial ribosomal protein bL20 family.

In terms of biological role, binds directly to 23S ribosomal RNA and is necessary for the in vitro assembly process of the 50S ribosomal subunit. It is not involved in the protein synthesizing functions of that subunit. In Treponema denticola (strain ATCC 35405 / DSM 14222 / CIP 103919 / JCM 8153 / KCTC 15104), this protein is Large ribosomal subunit protein bL20.